Reading from the N-terminus, the 431-residue chain is Polyprenol-phosphate-mannose-dependent alpha-(1-2)-phosphatidylinositol pentamannoside mannosyltransferase (431 aa).

A run of 10 helical transmembrane segments spans residues 43 to 63 (AAVL…YLAP), 108 to 128 (FAAV…ALLW), 148 to 168 (GGTA…AIWI), 175 to 195 (FDYG…VYTP), 202 to 222 (LLVG…VYLV), 229 to 249 (AAAF…LVVG), 290 to 310 (GFGP…ILAW), 332 to 352 (LSPI…IWLI), 364 to 384 (ILGW…LSFA), and 397 to 417 (LAWA…WIAA).

It belongs to the glycosyltransferase 87 family.

It localises to the cell membrane. It participates in phospholipid metabolism; phosphatidylinositol metabolism. Its function is as follows. Catalyzes the alpha-1,2 addition of a mannose residue from polyprenol-phosphate-mannose (PPM) to a monoacyl phosphatidylinositol tetramannoside (AcPIM4) to generate a monoacyl phosphatidylinositol pentamannoside (AcPIM5). In Mycobacterium tuberculosis (strain CDC 1551 / Oshkosh), this protein is Polyprenol-phosphate-mannose-dependent alpha-(1-2)-phosphatidylinositol pentamannoside mannosyltransferase (pimE).